A 570-amino-acid polypeptide reads, in one-letter code: Glycine--tRNA ligase (570 aa).

Residues Arg95 and Glu159 each contribute to the substrate site. Residues 191 to 193, 201 to 206, 312 to 313, and 426 to 429 each bind ATP; these read RNE, IRLREF, EV, and GLDR. Residue 206-210 participates in substrate binding; that stretch reads FNQAE. Residue 422–426 participates in substrate binding; it reads EPSFG.

It belongs to the class-II aminoacyl-tRNA synthetase family.

The protein localises to the cytoplasm. The catalysed reaction is tRNA(Gly) + glycine + ATP = glycyl-tRNA(Gly) + AMP + diphosphate. Catalyzes the attachment of glycine to tRNA(Gly). This is Glycine--tRNA ligase from Archaeoglobus fulgidus (strain ATCC 49558 / DSM 4304 / JCM 9628 / NBRC 100126 / VC-16).